The sequence spans 344 residues: MRYHGDMLLTTPVISTLKQNYPDAKIDMLLYQDTIPILSENPEINALYGISNKGAGTFDKIKNVLSLIKTLRANNYDLVINLTDQWMVALLVRCLPARMKISQLYGHRQHGIWKKSFTHLAPIHGTHIVERNLSVLEPLGITDFYTDTTMSYAEDCWKKMRRELDALGVKDHYVVIQPTARQIFKCWDNDKFSKVIDALQQRGYQVVLTCGPSADDLACVDEIARGCETKPITGLAGKTRFPELGALIDHAVLFIGVDSAPGHIAAAVKTPVISLFGATDHVFWRPWTENIIQFWAGNYQKMPTRHELDRNKKYLSVIPAEDVIAATEKLLPEDAPSADRNAQL.

Belongs to the glycosyltransferase 9 family.

It catalyses the reaction an L-alpha-D-Hep-(1-&gt;3)-4-O-phospho-L-alpha-D-Hep-(1-&gt;5)-[alpha-Kdo-(2-&gt;4)]-alpha-Kdo-(2-&gt;6)-lipid A + ADP-L-glycero-beta-D-manno-heptose = an L-alpha-D-Hep-(1-&gt;7)-L-alpha-D-Hep-(1-&gt;3)-4-O-phospho-L-alpha-D-Hep-(1-&gt;5)-[alpha-Kdo-(2-&gt;4)]-alpha-Kdo-(2-&gt;6)-lipid A + ADP + H(+). The catalysed reaction is L-alpha-D-Hep-(1-&gt;3)-4-O-phospho-L-alpha-D-Hep-(1-&gt;5)-[alpha-Kdo-(2-&gt;4)]-alpha-Kdo-(2-&gt;6)-lipid A (E. coli) + ADP-L-glycero-beta-D-manno-heptose = L-alpha-D-Hep-(1-&gt;7)-L-alpha-D-Hep-(1-&gt;3)-4-O-phospho-L-alpha-D-Hep-(1-&gt;5)-[alpha-Kdo-(2-&gt;4)]-alpha-Kdo-(2-&gt;6)-lipid A (E. coli) + ADP + H(+). Its pathway is bacterial outer membrane biogenesis; LPS core biosynthesis. In terms of biological role, glycosyltransferase involved in the biosynthesis of the core oligosaccharide region of lipopolysaccharide (LPS). Catalyzes the addition of the third heptose unit (HepIII) to the second heptose unit (HepII) of the phospho-Hep2-Kdo2-lipid A module. This is Lipopolysaccharide heptosyltransferase 3 from Escherichia coli (strain K12).